The sequence spans 121 residues: Putative ankyrin repeat protein L215 (121 aa).

2 ANK repeats span residues 10-40 (QYDS…SFKE) and 42-71 (IHET…NKLV).

This is Putative ankyrin repeat protein L215 from Acanthamoeba polyphaga mimivirus (APMV).